We begin with the raw amino-acid sequence, 325 residues long: Lipoyl synthase (325 aa).

7 residues coordinate [4Fe-4S] cluster: cysteine 72, cysteine 77, cysteine 83, cysteine 98, cysteine 102, cysteine 105, and serine 312. Positions 84–301 constitute a Radical SAM core domain; the sequence is FSSGTATFMI…AEEGMKMGFK (218 aa).

It belongs to the radical SAM superfamily. Lipoyl synthase family. [4Fe-4S] cluster serves as cofactor.

The protein localises to the cytoplasm. The enzyme catalyses [[Fe-S] cluster scaffold protein carrying a second [4Fe-4S](2+) cluster] + N(6)-octanoyl-L-lysyl-[protein] + 2 oxidized [2Fe-2S]-[ferredoxin] + 2 S-adenosyl-L-methionine + 4 H(+) = [[Fe-S] cluster scaffold protein] + N(6)-[(R)-dihydrolipoyl]-L-lysyl-[protein] + 4 Fe(3+) + 2 hydrogen sulfide + 2 5'-deoxyadenosine + 2 L-methionine + 2 reduced [2Fe-2S]-[ferredoxin]. It functions in the pathway protein modification; protein lipoylation via endogenous pathway; protein N(6)-(lipoyl)lysine from octanoyl-[acyl-carrier-protein]: step 2/2. In terms of biological role, catalyzes the radical-mediated insertion of two sulfur atoms into the C-6 and C-8 positions of the octanoyl moiety bound to the lipoyl domains of lipoate-dependent enzymes, thereby converting the octanoylated domains into lipoylated derivatives. This Stutzerimonas stutzeri (strain A1501) (Pseudomonas stutzeri) protein is Lipoyl synthase.